An 868-amino-acid polypeptide reads, in one-letter code: DNA topoisomerase 1 (868 aa).

Positions 3–147 constitute a Toprim domain; the sequence is KSLVIVESPA…RYKRVVFNEI (145 aa). Glu-9 is a Mg(2+) binding site. A disordered region spans residues 34-70; the sequence is IRDLPTSGSSSSKEPAAKGRKSASEAPALSPKEKARR. Asp-116 contacts Mg(2+). Residues 163-580 form the Topo IA-type catalytic domain; that stretch reads DINRVNAQQA…EFYGDFKKKL (418 aa). Residues 197-202 form an interaction with DNA region; it reads SAGRVQ. The O-(5'-phospho-DNA)-tyrosine intermediate role is filled by Tyr-324. C4-type zinc fingers lie at residues 602-633, 664-691, and 713-738; these read CREC…KERC, CPIC…NPDC, and CDKC…NPTC.

The protein belongs to the type IA topoisomerase family. In terms of assembly, monomer. Mg(2+) serves as cofactor.

It catalyses the reaction ATP-independent breakage of single-stranded DNA, followed by passage and rejoining.. In terms of biological role, releases the supercoiling and torsional tension of DNA, which is introduced during the DNA replication and transcription, by transiently cleaving and rejoining one strand of the DNA duplex. Introduces a single-strand break via transesterification at a target site in duplex DNA. The scissile phosphodiester is attacked by the catalytic tyrosine of the enzyme, resulting in the formation of a DNA-(5'-phosphotyrosyl)-enzyme intermediate and the expulsion of a 3'-OH DNA strand. The free DNA strand then undergoes passage around the unbroken strand, thus removing DNA supercoils. Finally, in the religation step, the DNA 3'-OH attacks the covalent intermediate to expel the active-site tyrosine and restore the DNA phosphodiester backbone. The polypeptide is DNA topoisomerase 1 (Pseudomonas aeruginosa (strain ATCC 15692 / DSM 22644 / CIP 104116 / JCM 14847 / LMG 12228 / 1C / PRS 101 / PAO1)).